The sequence spans 63 residues: Conotoxin PnMRCL-0111 (63 aa).

The first 19 residues, 1-19, serve as a signal peptide directing secretion; it reads MRCLPVFIVLLLLIVSAPG. The propeptide occupies 20–49; sequence FDARPKTEDDVPLSSFHDDLQRTVRTLLDI. Position 62 is a tryptophan amide (Trp-62).

It belongs to the conotoxin T superfamily. Post-translationally, contains 2 disulfide bonds that can be either 'C1-C3, C2-C4' or 'C1-C4, C2-C3', since these disulfide connectivities have been observed for conotoxins with cysteine framework V (for examples, see AC P0DQQ7 and AC P81755). In terms of tissue distribution, expressed by the venom duct.

It localises to the secreted. The polypeptide is Conotoxin PnMRCL-0111 (Conus pennaceus (Feathered cone)).